The chain runs to 345 residues: Platelet-derived growth factor C (345 aa).

An N-terminal signal peptide occupies residues methionine 1–alanine 22. Residues asparagine 25 and asparagine 55 are each glycosylated (N-linked (GlcNAc...) asparagine). The CUB domain occupies histidine 46–valine 163. Intrachain disulfides connect cysteine 104–cysteine 124, cysteine 250–cysteine 294, cysteine 280–cysteine 335, and cysteine 287–cysteine 337.

Belongs to the PDGF/VEGF growth factor family. As to quaternary structure, homodimer; disulfide-linked. Interacts with PDGFRA homodimers, and with heterodimers formed by PDGFRA and PDGFRB. Interacts (via CUB domain) with PLAT (via kringle domain). In terms of processing, proteolytic removal of the N-terminal CUB domain releasing the core domain is necessary for unmasking the receptor-binding epitopes of the core domain. Cleavage after basic residues in the hinge region (region connecting the CUB and growth factor domains) gives rise to the receptor-binding form. Cleaved by PLAT and PLG. Sumoylated with SUMO1. Post-translationally, N-glycosylated. In terms of tissue distribution, expressed in the fallopian tube, vascular smooth muscle cells in kidney, breast and colon and in visceral smooth muscle of the gastrointestinal tract. Highly expressed in retinal pigment epithelia. Expressed in medulloblastoma. In the kidney, constitutively expressed in parietal epithelial cells of Bowman's capsule, tubular epithelial cells and in arterial endothelial cells (at protein level). Highly expressed in the platelets, prostate, testis and uterus. Higher expression is observed in uterine leiomyomata. Weaker expression in the spleen, thymus, heart, pancreas, liver, ovary cells and small intestine, and negligible expression in the colon and peripheral blood leukocytes.

The protein resides in the cytoplasm. Its subcellular location is the cytosol. It is found in the secreted. The protein localises to the nucleus. It localises to the cytoplasmic granule. The protein resides in the cell membrane. Growth factor that plays an essential role in the regulation of embryonic development, cell proliferation, cell migration, survival and chemotaxis. Potent mitogen and chemoattractant for cells of mesenchymal origin. Required for normal skeleton formation during embryonic development, especially for normal development of the craniofacial skeleton and for normal development of the palate. Required for normal skin morphogenesis during embryonic development. Plays an important role in wound healing, where it appears to be involved in three stages: inflammation, proliferation and remodeling. Plays an important role in angiogenesis and blood vessel development. Involved in fibrotic processes, in which transformation of interstitial fibroblasts into myofibroblasts plus collagen deposition occurs. The CUB domain has mitogenic activity in coronary artery smooth muscle cells, suggesting a role beyond the maintenance of the latency of the PDGF domain. In the nucleus, PDGFC seems to have additional function. This chain is Platelet-derived growth factor C (PDGFC), found in Homo sapiens (Human).